The sequence spans 263 residues: Small ribosomal subunit protein eS4 (263 aa).

The 63-residue stretch at 42–104 (LPLIIFLRNR…TGEHFRLVYD (63 aa)) folds into the S4 RNA-binding domain.

Belongs to the eukaryotic ribosomal protein eS4 family. Component of the small ribosomal subunit.

Its subcellular location is the cytoplasm. Its function is as follows. Component of the small ribosomal subunit. The ribosome is a large ribonucleoprotein complex responsible for the synthesis of proteins in the cell. In Xenopus tropicalis (Western clawed frog), this protein is Small ribosomal subunit protein eS4 (rps4).